A 1254-amino-acid polypeptide reads, in one-letter code: Unconventional myosin-VI (1254 aa).

Positions 2-53 constitute a Myosin N-terminal SH3-like domain; that stretch reads EDGKPVWAPHPTDGFQVGNIVDIGPDSLTIEPLNQKGKTFLALINQVFPAEE. The Myosin motor domain maps to 57–772; sequence KDVEDNCSLM…KFAEFDQIMK (716 aa). 151-158 is a binding site for ATP; it reads GESGAGKT. The residue at position 267 (serine 267) is a Phosphoserine. The interval 273–317 is responsible for slow ATPase activity; that stretch reads YLNRGCTRYFANKETDKQILQNRKSPEYLKAGSLKDPLLDDHGDF. Phosphothreonine is present on threonine 406. The residue at position 605 (serine 605) is a Phosphoserine. The tract at residues 666 to 673 is actin-binding; sequence FIRCIKPN. The interval 783–811 is required for binding calmodulin; sequence KRVNHWLICSRWKKVQWCSLSVIKLKNKI. The region spanning 814 to 843 is the IQ domain; that stretch reads RAEACIKMQKTIRMWLCKRRHKPRIDGLVK. The interval 836–917 is three-helix bundle; that stretch reads PRIDGLVKVG…AVLLSALQKK (82 aa). Residues 918-985 are SAH; it reads KQQEEEAERL…EDDEKRIQAE (68 aa). The segment at 935 to 956 is disordered; the sequence is EKERKRREEDEQRRRKEEEERR. Serine 1026 is modified (phosphoserine). The interval 1037–1245 is interaction with TAX1BP1 and CALCOCO2/NDP52; the sequence is RGPAVQATKA…ESRQARPTYA (209 aa). The tract at residues 1085–1087 is interaction with OPTN; the sequence is RRL. Residues 1096 to 1117 form a disordered region; that stretch reads KNKKRNTETEQRAPKSVTDYAQ. Positions 1117–1245 are interaction with TOM1; that stretch reads QQNPAVQLPA…ESRQARPTYA (129 aa).

Belongs to the TRAFAC class myosin-kinesin ATPase superfamily. Myosin family. As to quaternary structure, homodimer; dimerization seems to implicate the unfolding of the three-helix bundle region creating an additional calmodulin binding site, and cargo binding. Component of the DISP/DOCK7-induced septin displacement complex, at least composed of DOCK7, LRCH3 and MYO6. Able to function as a monomer under specific conditions in vitro. Forms a complex with CFTR and DAB2 in the apical membrane of epithelial cells. Binding to calmodulin through a unique insert, not found in other myosins, located in the neck region between the motor domain and the IQ domain appears to contribute to the directionality reversal. This interaction occurs only if the C-terminal lobe of calmodulin is occupied by calcium. Interaction with F-actin/ACTN1 occurs only at the apical brush border domain of the proximal tubule cells. Interacts with DAB2. In vitro, the C-terminal globular tail binds a C-terminal region of DAB2. Interacts with CFTR. Interacts with CABP5. Interacts (via residues 1117-1245) with TOM1 (via residues 392-463). Interacts (via residues 1060-1285) with OPTN. Interacts (via residues 1060-1285) with TAX1BP1 and CALCOCO2/NDP52. Interacts with TOM1L2. Interacts with CLIC5; may work together in a complex which also includes RDX and MYO6 to stabilize linkages between the plasma membrane and subjacent actin cytoskeleton at the base of stereocilia. Post-translationally, phosphorylation in the motor domain, induced by EGF, results in translocation of MYO6 from the cell surface to membrane ruffles and affects F-actin dynamics. Phosphorylated in vitro by p21-activated kinase (PAK). In terms of tissue distribution, expressed in all tissues examined including kidney cortex, intestinal mucosa, liver, lung, heart, jowl muscle, brain cortex and medulla, and in the epithelial cell line, LLC-PK1 (at protein level). In the kidney, located to the brush border of adult kidney proximal tubule cells.

It localises to the golgi apparatus. The protein resides in the trans-Golgi network membrane. It is found in the nucleus. The protein localises to the cytoplasm. Its subcellular location is the perinuclear region. It localises to the membrane. The protein resides in the clathrin-coated pit. It is found in the cytoplasmic vesicle. The protein localises to the clathrin-coated vesicle. Its subcellular location is the cell projection. It localises to the filopodium. The protein resides in the ruffle membrane. It is found in the microvillus. The protein localises to the cytosol. Its function is as follows. Myosins are actin-based motor molecules with ATPase activity. Unconventional myosins serve in intracellular movements. Myosin 6 is a reverse-direction motor protein that moves towards the minus-end of actin filaments. Has slow rate of actin-activated ADP release due to weak ATP binding. Functions in a variety of intracellular processes such as vesicular membrane trafficking and cell migration. Required for the structural integrity of the Golgi apparatus via the p53-dependent pro-survival pathway. Appears to be involved in a very early step of clathrin-mediated endocytosis in polarized epithelial cells. Together with TOM1, mediates delivery of endocytic cargo to autophagosomes thereby promoting autophagosome maturation and driving fusion with lysosomes. Links TOM1 with autophagy receptors, such as TAX1BP1; CALCOCO2/NDP52 and OPTN. May act as a regulator of F-actin dynamics. As part of the DISP complex, may regulate the association of septins with actin and thereby regulate the actin cytoskeleton. May play a role in transporting DAB2 from the plasma membrane to specific cellular targets. May play a role in the extension and network organization of neurites. Required for structural integrity of inner ear hair cells. Required for the correct localization of CLIC5 and RDX at the stereocilium base. Modulates RNA polymerase II-dependent transcription. This chain is Unconventional myosin-VI (MYO6), found in Sus scrofa (Pig).